A 517-amino-acid polypeptide reads, in one-letter code: MARMGLAGAAGRWWGLALGLTAFFLPGVHSQVVQVNDSMYGFIGTDVVLHCSFANPLPSVKITQVTWQKSTNGSKQNVAIYNPSMGVSVLAPYRERVEFLRPSFTDGTIRLSRLELEDEGVYICEFATFPTGNRESQLNLTVMAKPTNWIEGTQAVLRAKKGQDDKVLVATCTSANGKPPSVVSWETRLKGEAEYQEIRNPNGTVTVISRYRLVPSREAHQQSLACIVNYHMDRFKESLTLNVQYEPEVTIEGFDGNWYLQRMDVKLTCKADANPPATEYHWTTLNGSLPKGVEAQNRTLFFKGPINYSLAGTYICEATNPIGTRSGQVEVNITEFPYTPSPPEHGRRAGPVPTAIIGGVAGSILLVLIVVGGIVVALRRRRHTFKGDYSTKKHVYGNGYSKAGIPQHHPPMAQNLQYPDDSDDEKKAGPLGGSSYEEEEEEEEGGGGGERKVGGPHPKYDEDAKRPYFTVDEAEARQDGYGDRTLGYQYDPEQLDLAENMVSQNDGSFISKKEWYV.

Residues M1–S30 form the signal peptide. Residues Q31–T141 form the Ig-like V-type domain. Residues Q31 to A355 lie on the Extracellular side of the membrane. N-linked (GlcNAc...) asparagine glycosylation is found at N36, N72, and N139. An intrachain disulfide couples C51 to C124. Ig-like C2-type domains are found at residues W149–S238 and P247–T334. Disulfide bonds link C172–C226 and C269–C316. Residue N202 is glycosylated (N-linked (GlcNAc...) (complex) asparagine). An interaction with FGFR region spans residues W282 to T299. N-linked (GlcNAc...) asparagine glycosylation is found at N286, N297, N307, and N332. A helical membrane pass occupies residues I356–V376. Residues A377–V517 lie on the Cytoplasmic side of the membrane. The tract at residues G399–Y488 is disordered. Phosphoserine occurs at positions 422, 434, and 435. A Phosphotyrosine modification is found at Y436. A compositionally biased stretch (acidic residues) spans Y436–G445. Residues G449 to R466 show a composition bias toward basic and acidic residues. S511 carries the phosphoserine modification.

It belongs to the nectin family. In terms of assembly, cis- and trans-homodimer. Can form trans-heterodimers with NECTIN3 and with NECTIN4. Interaction between NECTIN1 and NECTIN3 on the pre- and postsynaptic sites, respectively, initiates the formation of puncta adherentia junctions between axons and dendrites. Interacts (via cytoplasmic domain) with AFDN (via PDZ domain); this interaction recruits NECTIN1 to cadherin-based adherens junctions and provides a connection with the actin cytoskeleton. Interacts with integrin alphaV/beta3. Interacts (via Ig-like C2-type domain 2) with FGFR1, FGFR2 and FGFR3. (Microbial infection) Interacts with herpes simplex virus 1/HHV-1, herpes simplex virus 2/HHV-2, and pseudorabies virus/PRV envelope glycoprotein D. (Microbial infection) Ubiquitinated by CBL following infection by herpes simplex virus 1/HHV-1 and association with HHV-1 envelope glycoprotein D, leading to its removal from cell surface.

Its subcellular location is the cell membrane. It localises to the cell junction. It is found in the adherens junction. The protein localises to the presynaptic cell membrane. The protein resides in the secreted. Functionally, cell adhesion molecule that promotes cell-cell contacts and plays important roles in the development of the nervous system. Acts by forming homophilic or heterophilic trans-dimers. Heterophilic interactions have been detected between NECTIN1 and NECTIN3 and between NECTIN1 and NECTIN4. Involved in axon guidance by promoting contacts between the commissural axons and the floor plate cells. Involved in synaptogegesis. Has some neurite outgrowth-promoting activity. Promotes formation of checkerboard-like cellular pattern of hair cells and supporting cells in the auditory epithelium via heterophilic interaction with NECTIN3: NECTIN1 is present in the membrane of hair cells and associates with NECTIN3 on supporting cells, thereby mediating heterotypic adhesion between these two cell types. Required for enamel mineralization. In terms of biological role, (Microbial infection) Acts as a receptor for herpes simplex virus 1/HHV-1, herpes simplex virus 2/HHV-2, and pseudorabies virus/PRV. Constitutes the major receptor for herpes simplex virus 1/HHV-1 entry into host cells. This chain is Nectin-1, found in Homo sapiens (Human).